The following is a 72-amino-acid chain: GDDVKSACCDTCLCTKSNPPTCRCVDVGETCHSACLSCICAYSNPPKCQCFDTQKFCYKACHNSELEEVIKN.

Cystine bridges form between cysteine 8–cysteine 61, cysteine 9–cysteine 24, cysteine 12–cysteine 57, cysteine 14–cysteine 22, cysteine 31–cysteine 38, cysteine 35–cysteine 50, and cysteine 40–cysteine 48.

Belongs to the Bowman-Birk serine protease inhibitor family. In terms of tissue distribution, seed.

In terms of biological role, inhibitor of trypsin and of chymotrypsin. May function as a natural phytochemical defense against predators. The protein is Seed trypsin/chymotrypsin inhibitor IVB of Pisum sativum (Garden pea).